Reading from the N-terminus, the 420-residue chain is tRNA (guanine-N(7)-)-methyltransferase non-catalytic subunit TRM82 (420 aa).

A compositionally biased stretch (basic and acidic residues) spans 59 to 68 (KENDSKRQKS). Residues 59–82 (KENDSKRQKSESGQAKVSKIPTPG) are disordered. WD repeat units follow at residues 87–127 (PIYN…DNCL), 179–220 (GHVS…VIKN), 224–266 (GHHE…AKIE), and 340–379 (SYED…EETN).

This sequence belongs to the WD repeat TRM82 family. In terms of assembly, forms a heterodimer with the catalytic subunit TRM8.

It localises to the nucleus. Its pathway is tRNA modification; N(7)-methylguanine-tRNA biosynthesis. In terms of biological role, required for the formation of N(7)-methylguanine at position 46 (m7G46) in tRNA. In the complex, it is required to stabilize and induce conformational changes of the catalytic subunit. This chain is tRNA (guanine-N(7)-)-methyltransferase non-catalytic subunit TRM82, found in Meyerozyma guilliermondii (strain ATCC 6260 / CBS 566 / DSM 6381 / JCM 1539 / NBRC 10279 / NRRL Y-324) (Yeast).